A 499-amino-acid polypeptide reads, in one-letter code: Replication factor C large subunit (499 aa).

An ATP-binding site is contributed by 50–57; sequence GPPGVGKT. Positions 428–499 are disordered; the sequence is EAERRVEAAE…QATLFDFLKK (72 aa). Positions 436 to 472 are enriched in acidic residues; the sequence is AEEEETMEAGEPEEELEEVEEEELTEEELEEAEEEIE. Residues 473–484 are compositionally biased toward basic and acidic residues; sequence TVGKKEKPEKEK.

Belongs to the activator 1 small subunits family. RfcL subfamily. In terms of assembly, heteromultimer composed of small subunits (RfcS) and large subunits (RfcL).

Its function is as follows. Part of the RFC clamp loader complex which loads the PCNA sliding clamp onto DNA. The polypeptide is Replication factor C large subunit (Thermococcus kodakarensis (strain ATCC BAA-918 / JCM 12380 / KOD1) (Pyrococcus kodakaraensis (strain KOD1))).